A 126-amino-acid chain; its full sequence is Glycine cleavage system H protein (126 aa).

The region spanning 22–103 is the Lipoyl-binding domain; the sequence is KAYIGITDYA…PYGSWMALVE (82 aa). Lysine 63 carries the N6-lipoyllysine modification.

This sequence belongs to the GcvH family. As to quaternary structure, the glycine cleavage system is composed of four proteins: P, T, L and H. (R)-lipoate is required as a cofactor.

Functionally, the glycine cleavage system catalyzes the degradation of glycine. The H protein shuttles the methylamine group of glycine from the P protein to the T protein. The protein is Glycine cleavage system H protein of Thermoanaerobacter sp. (strain X514).